A 157-amino-acid chain; its full sequence is S-ribosylhomocysteine lyase (157 aa).

H54, H58, and C126 together coordinate Fe cation.

Belongs to the LuxS family. Homodimer. Requires Fe cation as cofactor.

It catalyses the reaction S-(5-deoxy-D-ribos-5-yl)-L-homocysteine = (S)-4,5-dihydroxypentane-2,3-dione + L-homocysteine. In terms of biological role, involved in the synthesis of autoinducer 2 (AI-2) which is secreted by bacteria and is used to communicate both the cell density and the metabolic potential of the environment. The regulation of gene expression in response to changes in cell density is called quorum sensing. Catalyzes the transformation of S-ribosylhomocysteine (RHC) to homocysteine (HC) and 4,5-dihydroxy-2,3-pentadione (DPD). The sequence is that of S-ribosylhomocysteine lyase from Bacillus licheniformis (strain ATCC 14580 / DSM 13 / JCM 2505 / CCUG 7422 / NBRC 12200 / NCIMB 9375 / NCTC 10341 / NRRL NRS-1264 / Gibson 46).